Reading from the N-terminus, the 318-residue chain is NAD kinase (318 aa).

Residue aspartate 84 is the Proton acceptor of the active site. Residues 84–85 (DG), arginine 89, 159–160 (NE), arginine 170, aspartate 189, and 200–205 (TAYAFS) each bind NAD(+).

The protein belongs to the NAD kinase family. Requires a divalent metal cation as cofactor.

It is found in the cytoplasm. It catalyses the reaction NAD(+) + ATP = ADP + NADP(+) + H(+). Its function is as follows. Involved in the regulation of the intracellular balance of NAD and NADP, and is a key enzyme in the biosynthesis of NADP. Catalyzes specifically the phosphorylation on 2'-hydroxyl of the adenosine moiety of NAD to yield NADP. This is NAD kinase from Cutibacterium acnes (strain DSM 16379 / KPA171202) (Propionibacterium acnes).